Here is a 284-residue protein sequence, read N- to C-terminus: Tropomyosin alpha-1 chain (284 aa).

Residues 1 to 38 (MDAIKKKMQMLKLDKENALDRAEQAEADKKGAEDKSKQ) are disordered. Positions 1–284 (MDAIKKKMQM…DHALNDMTSI (284 aa)) form a coiled coil. Over residues 12–38 (KLDKENALDRAEQAEADKKGAEDKSKQ) the composition is skewed to basic and acidic residues.

Belongs to the tropomyosin family. In terms of assembly, homodimer. Heterodimer of an alpha (TPM1, TPM3 or TPM4) and a beta (TPM2) chain.

The protein resides in the cytoplasm. Its subcellular location is the cytoskeleton. Functionally, binds to actin filaments in muscle and non-muscle cells. Plays a central role, in association with the troponin complex, in the calcium dependent regulation of vertebrate striated muscle contraction. Smooth muscle contraction is regulated by interaction with caldesmon. In non-muscle cells is implicated in stabilizing cytoskeleton actin filaments. In Xenopus laevis (African clawed frog), this protein is Tropomyosin alpha-1 chain (tpm1).